The sequence spans 376 residues: UPF0284 protein glr4139 (376 aa).

It belongs to the UPF0284 family.

In Gloeobacter violaceus (strain ATCC 29082 / PCC 7421), this protein is UPF0284 protein glr4139.